A 396-amino-acid polypeptide reads, in one-letter code: Flavohemoprotein (396 aa).

The Globin domain maps to 1 to 136 (MLDAQTIATV…LANVFIHREA (136 aa)). Histidine 85 is a heme b binding site. Catalysis depends on charge relay system residues tyrosine 95 and glutamate 135. Residues 147–396 (GGWEGTRPFR…YECFGPHKVL (250 aa)) are reductase. Positions 150 to 255 (EGTRPFRIVA…AAPAGDFFMN (106 aa)) constitute an FAD-binding FR-type domain. FAD is bound by residues tyrosine 188 and 204–207 (RQYS). Position 268–273 (268–273 (GVGQTP)) interacts with NADP(+). 389-392 (CFGP) is a binding site for FAD.

It belongs to the globin family. Two-domain flavohemoproteins subfamily. In the C-terminal section; belongs to the flavoprotein pyridine nucleotide cytochrome reductase family. The cofactor is heme b. Requires FAD as cofactor.

The catalysed reaction is 2 nitric oxide + NADPH + 2 O2 = 2 nitrate + NADP(+) + H(+). It carries out the reaction 2 nitric oxide + NADH + 2 O2 = 2 nitrate + NAD(+) + H(+). Functionally, is involved in NO detoxification in an aerobic process, termed nitric oxide dioxygenase (NOD) reaction that utilizes O(2) and NAD(P)H to convert NO to nitrate, which protects the bacterium from various noxious nitrogen compounds. Therefore, plays a central role in the inducible response to nitrosative stress. This chain is Flavohemoprotein, found in Salmonella typhi.